The following is a 204-amino-acid chain: Serotype 3 fimbrial subunit (204 aa).

The signal sequence occupies residues 1-25 (MSKFSYPALRAALILAASPVLPALA). Cys41 and Cys84 form a disulfide bridge.

Belongs to the fimbrial protein family.

The protein resides in the fimbrium. In terms of biological role, bordetella pertussis is the causative agent of whooping cough. An essential step in the disease process is the attachment of the bacteria to the ciliated epithelium of the respiratory tract, enabling the organism to resist normal host-clearance mechanisms. It is unclear which bacterial cell surface component are responsible for adherence but the fimbriae of B.pertussis are prime candidates for being involved in this process. This chain is Serotype 3 fimbrial subunit (fim3), found in Bordetella pertussis (strain Tohama I / ATCC BAA-589 / NCTC 13251).